Reading from the N-terminus, the 54-residue chain is Ovomucoid (54 aa).

The 51-residue stretch at valine 4–cysteine 54 folds into the Kazal-like domain. Cystine bridges form between cysteine 6-cysteine 36, cysteine 14-cysteine 33, and cysteine 22-cysteine 54. An N-linked (GlcNAc...) asparagine glycan is attached at asparagine 43.

Its subcellular location is the secreted. The polypeptide is Ovomucoid (Chroicocephalus ridibundus (Black-headed gull)).